The chain runs to 491 residues: uncharacterized protein (491 aa).

A run of 12 helical transmembrane segments spans residues 48-68, 85-105, 112-132, 140-160, 174-194, 202-222, 277-297, 317-337, 358-378, 383-403, 408-428, and 455-475; these read LILV…VAPC, ALIL…SAPL, RMLL…CGLA, IFRF…SGTI, AVMS…SGFI, WIFW…LPLL, PIVI…YLVL, LNYI…GIFI, VPVI…YGWT, THWI…MLGW, TYLI…ACCV, and LLAF…WFGG.

It belongs to the major facilitator superfamily.

The protein localises to the membrane. This is an uncharacterized protein from Schizosaccharomyces pombe (strain 972 / ATCC 24843) (Fission yeast).